The chain runs to 391 residues: Secreted aspartic protease 1 (391 aa).

The first 18 residues, 1-18 (MFLKNIFIALAIALLVDA), serve as a signal peptide directing secretion. A propeptide spans 19–50 (SPAKRSPGFVTLDFDVIKTPVNATGQEGKVKR) (activation peptide). An N-linked (GlcNAc...) asparagine glycan is attached at Asn40. The region spanning 64–377 (YAADITIGSN…DLDDDKISLA (314 aa)) is the Peptidase A1 domain. Asp82 is a catalytic residue. Position 82 to 84 (82 to 84 (DTG)) interacts with pepstatin A. Cysteines 97 and 109 form a disulfide. Asp241 and Asp263 together coordinate Zn(2+). Residue Asp267 is part of the active site. 267–271 (DSGTT) serves as a coordination point for pepstatin A. Cys305 and Cys343 are oxidised to a cystine.

The protein belongs to the peptidase A1 family. In terms of assembly, monomer.

Its subcellular location is the secreted. The catalysed reaction is Preferential cleavage at the carboxyl of hydrophobic amino acids, but fails to cleave 15-Leu-|-Tyr-16, 16-Tyr-|-Leu-17 and 24-Phe-|-Phe-25 of insulin B chain. Activates trypsinogen, and degrades keratin.. Its activity is regulated as follows. Inhibited by pepstatin A analogs and squash aspartic peptidase inhibitor (SQAPI). Functionally, secreted aspartic peptidases (SAPs) are a group of ten acidic hydrolases considered as key virulence factors. These enzymes supply the fungus with nutrient amino acids as well as are able to degrade the selected host's proteins involved in the immune defense. Induces host inflammatory cytokine production in a proteolytic activity-independent way. Plays a role in tissue damage during superficial infection. Moreover, acts toward human hemoglobin though limited proteolysis to generate a variety of antimicrobial hemocidins, enabling to compete with the other microorganisms of the same physiological niche using the microbicidal peptides generated from the host protein. Its function is as follows. Plays a key role in defense against host by cleaving histatin-5 (Hst 5), a peptide from human saliva that carries out fungicidal activity. The cleavage rate decreases in an order of SAP2 &gt; SAP9 &gt; SAP3 &gt; SAP7 &gt; SAP4 &gt; SAP1 &gt; SAP8. The first cleavage occurs between residues 'Lys-17' and 'His-18' of Hst 5, giving DSHAKRHHGYKRKFHEK and HHSHRGY peptides. Further fragmentation by SAP1 results in AKRHHGYKRKFHEK and AKRHHGY products. This is Secreted aspartic protease 1 from Candida albicans (Yeast).